The following is a 313-amino-acid chain: Pre-mRNA-splicing factor 38A (313 aa).

Residues 1–179 (MANRTVKDAN…VLEEAELLDP (179 aa)) are N-terminal protein interaction domain. A coiled-coil region spans residues 172–201 (EEAELLDPRISALEEDLDEVETSEEEDDED). Residues 182–313 (SALEEDLDEV…SHKRSRRGNE (132 aa)) form a disordered region. Residues 184–202 (LEEDLDEVETSEEEDDEDE) show a composition bias toward acidic residues. Positions 203 to 224 (KPERMQSPEPHRRSYRDMDRPR) are enriched in basic and acidic residues. Composition is skewed to basic residues over residues 225–250 (RSPS…RSPS), 260–294 (HRSK…RSHS), and 302–313 (KKSHKRSRRGNE).

This sequence belongs to the PRP38 family. Component of the spliceosome B complex.

It localises to the nucleus. In terms of biological role, involved in pre-mRNA splicing as a component of the spliceosome. The sequence is that of Pre-mRNA-splicing factor 38A (prpf38a) from Danio rerio (Zebrafish).